A 482-amino-acid polypeptide reads, in one-letter code: Putative metabolite transport protein YfiG (482 aa).

Over Met-1 to Thr-29 the chain is Cytoplasmic. A helical transmembrane segment spans residues Phe-30–Ala-50. The Extracellular segment spans residues Thr-51–Pro-59. Residues Val-60–Gly-80 form a helical membrane-spanning segment. At Gly-81 to Thr-92 the chain is on the cytoplasmic side. A helical membrane pass occupies residues Ile-93–Ala-113. Over Ser-114–Arg-120 the chain is Extracellular. Residues Phe-121–Ile-141 form a helical membrane-spanning segment. Residues Ser-142–Glu-155 lie on the Cytoplasmic side of the membrane. The helical transmembrane segment at Leu-156–Met-176 threads the bilayer. Residues Gly-177–Arg-184 are Extracellular-facing. The chain crosses the membrane as a helical span at residues Tyr-185 to Pro-205. Residues Glu-206–Arg-263 lie on the Cytoplasmic side of the membrane. Residues Ile-264–Met-284 form a helical membrane-spanning segment. The Extracellular segment spans residues Tyr-285–Ala-301. Residues Leu-302 to Leu-322 form a helical membrane-spanning segment. At Leu-323–Met-331 the chain is on the cytoplasmic side. 2 helical membrane-spanning segments follow: residues Leu-332–Val-352 and Leu-353–Phe-373. Residues Gln-374–Gly-400 are Cytoplasmic-facing. The chain crosses the membrane as a helical span at residues Ile-401–Leu-421. Over Asn-422–His-423 the chain is Extracellular. The helical transmembrane segment at Ile-424 to Val-444 threads the bilayer. Residues Lys-445–Ser-482 lie on the Cytoplasmic side of the membrane.

It belongs to the major facilitator superfamily. Sugar transporter (TC 2.A.1.1) family.

The protein localises to the cell membrane. The protein is Putative metabolite transport protein YfiG (yfiG) of Bacillus subtilis (strain 168).